Reading from the N-terminus, the 739-residue chain is NAD(P)H-quinone oxidoreductase subunit 5, chloroplastic (739 aa).

The next 16 helical transmembrane spans lie at 9–29 (WIIP…LLLV), 39–59 (IWAF…ADLA), 89–109 (IDPL…MVLI), 125–145 (FAYM…SNLI), 147–167 (IYIF…FWFT), 185–205 (GDFG…SFEF), 224–244 (LFAA…SAQF), 258–278 (TPIS…FLVA), 280–300 (LLPL…IGII), 327–347 (LGYI…FHLI), 354–374 (ALLF…VGYS), 396–416 (TTFF…CFWS), 425–445 (WLYS…TAFY), 544–564 (LFPM…GIPF), 603–623 (IYSV…YGSV), and 719–739 (YIFL…FFSF).

The protein belongs to the complex I subunit 5 family. In terms of assembly, NDH is composed of at least 16 different subunits, 5 of which are encoded in the nucleus.

It localises to the plastid. It is found in the chloroplast thylakoid membrane. It carries out the reaction a plastoquinone + NADH + (n+1) H(+)(in) = a plastoquinol + NAD(+) + n H(+)(out). The catalysed reaction is a plastoquinone + NADPH + (n+1) H(+)(in) = a plastoquinol + NADP(+) + n H(+)(out). NDH shuttles electrons from NAD(P)H:plastoquinone, via FMN and iron-sulfur (Fe-S) centers, to quinones in the photosynthetic chain and possibly in a chloroplast respiratory chain. The immediate electron acceptor for the enzyme in this species is believed to be plastoquinone. Couples the redox reaction to proton translocation, and thus conserves the redox energy in a proton gradient. This is NAD(P)H-quinone oxidoreductase subunit 5, chloroplastic (ndhF) from Acorus calamus var. americanus (American sweet flag).